A 231-amino-acid polypeptide reads, in one-letter code: MSALCPLPTPPASEALLLAQARQLSGYTLGELAAMAGITTPKDLKRDKGWIGVLLEIWLGASAGSKPEQDFAALGVELKTIPVDSLGRPLETTFVCVAPLTGNSGVTWETSHVRHKLKRVLWVPVEGNRSIPLAERRVGSPLLWSPSEEEDRQLRLDWEELMDMIVLGQVERITARHGEVLQLRPKAVNARALTEAIGARGEPILTLPRGFYLKKNFTQALLARHFLLQNP.

The protein belongs to the MutH family.

It is found in the cytoplasm. Its function is as follows. Sequence-specific endonuclease that cleaves unmethylated GATC sequences. It is involved in DNA mismatch repair. This is DNA mismatch repair protein MutH from Salmonella paratyphi A (strain ATCC 9150 / SARB42).